We begin with the raw amino-acid sequence, 215 residues long: Probable nicotinate-nucleotide adenylyltransferase (215 aa).

Belongs to the NadD family.

The enzyme catalyses nicotinate beta-D-ribonucleotide + ATP + H(+) = deamido-NAD(+) + diphosphate. It functions in the pathway cofactor biosynthesis; NAD(+) biosynthesis; deamido-NAD(+) from nicotinate D-ribonucleotide: step 1/1. In terms of biological role, catalyzes the reversible adenylation of nicotinate mononucleotide (NaMN) to nicotinic acid adenine dinucleotide (NaAD). The polypeptide is Probable nicotinate-nucleotide adenylyltransferase (Coxiella burnetii (strain RSA 331 / Henzerling II)).